Reading from the N-terminus, the 156-residue chain is Ribosome-binding factor A (156 aa).

The tract at residues threonine 124–arginine 156 is disordered.

It belongs to the RbfA family. Monomer. Binds 30S ribosomal subunits, but not 50S ribosomal subunits or 70S ribosomes.

The protein resides in the cytoplasm. Functionally, one of several proteins that assist in the late maturation steps of the functional core of the 30S ribosomal subunit. Associates with free 30S ribosomal subunits (but not with 30S subunits that are part of 70S ribosomes or polysomes). Required for efficient processing of 16S rRNA. May interact with the 5'-terminal helix region of 16S rRNA. This Salinispora tropica (strain ATCC BAA-916 / DSM 44818 / JCM 13857 / NBRC 105044 / CNB-440) protein is Ribosome-binding factor A.